The sequence spans 84 residues: MENIITATIFGSVILLAAAALGTAIGFSLLGGKFLESSARQPELAASLQTKMFIVAGLLDAISMIAVGIALLFIFANPFIGLLN.

A run of 2 helical transmembrane segments spans residues 9–29 and 54–74; these read IFGSVILLAAAALGTAIGFSL and IVAGLLDAISMIAVGIALLFI.

Belongs to the ATPase C chain family. As to quaternary structure, F-type ATPases have 2 components, F(1) - the catalytic core - and F(0) - the membrane proton channel. F(1) has five subunits: alpha(3), beta(3), gamma(1), delta(1), epsilon(1). F(0) has three main subunits: a(1), b(2) and c(10-14). The alpha and beta chains form an alternating ring which encloses part of the gamma chain. F(1) is attached to F(0) by a central stalk formed by the gamma and epsilon chains, while a peripheral stalk is formed by the delta and b chains.

It is found in the cell inner membrane. F(1)F(0) ATP synthase produces ATP from ADP in the presence of a proton or sodium gradient. F-type ATPases consist of two structural domains, F(1) containing the extramembraneous catalytic core and F(0) containing the membrane proton channel, linked together by a central stalk and a peripheral stalk. During catalysis, ATP synthesis in the catalytic domain of F(1) is coupled via a rotary mechanism of the central stalk subunits to proton translocation. Functionally, key component of the F(0) channel; it plays a direct role in translocation across the membrane. A homomeric c-ring of between 10-14 subunits forms the central stalk rotor element with the F(1) delta and epsilon subunits. The chain is ATP synthase subunit c from Histophilus somni (strain 2336) (Haemophilus somnus).